Reading from the N-terminus, the 205-residue chain is Small ribosomal subunit protein uS5 (205 aa).

The S5 DRBM domain maps to 49-112; that stretch reads LEDEVLDIAM…TKAKMNLVKV (64 aa).

Belongs to the universal ribosomal protein uS5 family. As to quaternary structure, part of the 30S ribosomal subunit. Contacts protein S4.

Its function is as follows. With S4 and S12 plays an important role in translational accuracy. The protein is Small ribosomal subunit protein uS5 of Methanoregula boonei (strain DSM 21154 / JCM 14090 / 6A8).